The chain runs to 122 residues: Large ribosomal subunit protein uL22c (122 aa).

It belongs to the universal ribosomal protein uL22 family. In terms of assembly, part of the 50S ribosomal subunit.

It localises to the plastid. Its subcellular location is the chloroplast. This protein binds specifically to 23S rRNA. Functionally, the globular domain of the protein is located near the polypeptide exit tunnel on the outside of the subunit, while an extended beta-hairpin is found that lines the wall of the exit tunnel in the center of the 70S ribosome. The protein is Large ribosomal subunit protein uL22c (rpl22) of Adiantum capillus-veneris (Maidenhair fern).